Consider the following 578-residue polypeptide: Putative multidrug export ATP-binding/permease protein SA1683 (578 aa).

At 1 to 15 the chain is on the cytoplasmic side; that stretch reads MIKRYLQFVKPYKYR. A helical membrane pass occupies residues 16–36; that stretch reads IFATIIVGIIKFGIPMLIPLL. The ABC transmembrane type-1 domain occupies 16–306; the sequence is IFATIIVGII…LVASFTTLTQ (291 aa). At 37–59 the chain is on the extracellular side; sequence IKYAIDGVINNHALTTDEKVHHL. Residues 60 to 80 form a helical membrane-spanning segment; it reads TIAIGIALFIFVIVRPPIEFI. Topologically, residues 81-138 are cytoplasmic; the sequence is RQYLAQWTSNKILYDIRKKLYNHLQALSARFYANNQVGQVISRVINDVEQTKDFILTG. A helical membrane pass occupies residues 139 to 159; sequence LMNIWLDCITIIIALSIMFFL. Residues 160-162 lie on the Extracellular side of the membrane; the sequence is DVK. A helical transmembrane segment spans residues 163–183; that stretch reads LTLAALFIFPFYILTVYVFFG. The Cytoplasmic segment spans residues 184 to 244; sequence RLRKLTRERS…TRALKHTRWN (61 aa). A helical transmembrane segment spans residues 245–263; it reads AYSFAAINTVTDIGPIIVI. Residues 264-269 lie on the Extracellular side of the membrane; the sequence is GVGAYL. The chain crosses the membrane as a helical span at residues 270 to 287; the sequence is AISGSITVGTLAAFVGYL. Over 288 to 578 the chain is Cytoplasmic; the sequence is ELLFGPLRRL…YEHLYSIQNL (291 aa). The ABC transporter domain maps to 340–575; the sequence is IDIDHVSFQY…QGAYEHLYSI (236 aa). Position 374 to 381 (374 to 381) interacts with ATP; the sequence is GMSGGGKS.

The protein belongs to the ABC transporter superfamily. In terms of assembly, homodimer.

It localises to the cell membrane. May be involved in multidrug export. Transmembrane domains (TMD) form a pore in the cell membrane and the ATP-binding domain (NBD) is responsible for energy generation. The protein is Putative multidrug export ATP-binding/permease protein SA1683 of Staphylococcus aureus (strain N315).